Consider the following 102-residue polypeptide: Small ribosomal subunit protein uS10 (102 aa).

The protein belongs to the universal ribosomal protein uS10 family. As to quaternary structure, part of the 30S ribosomal subunit.

Its function is as follows. Involved in the binding of tRNA to the ribosomes. The polypeptide is Small ribosomal subunit protein uS10 (Methylobacterium nodulans (strain LMG 21967 / CNCM I-2342 / ORS 2060)).